We begin with the raw amino-acid sequence, 299 residues long: GTPase Era (299 aa).

Residues 5–172 (KSGFVSIIGR…IDVLKTYLPE (168 aa)) form the Era-type G domain. The segment at 13–20 (GRPNVGKS) is G1. GTP is bound at residue 13–20 (GRPNVGKS). Positions 39–43 (QTTRN) are G2. A G3 region spans residues 60–63 (DTPG). Residues 60-64 (DTPGI) and 122-125 (NKID) contribute to the GTP site. A G4 region spans residues 122–125 (NKID). Positions 151 to 153 (ISA) are G5. In terms of domain architecture, KH type-2 spans 203 to 280 (TSEEIPHAIG…YLELWVKVQR (78 aa)).

Belongs to the TRAFAC class TrmE-Era-EngA-EngB-Septin-like GTPase superfamily. Era GTPase family. As to quaternary structure, monomer.

It is found in the cytoplasm. The protein resides in the cell membrane. In terms of biological role, an essential GTPase that binds both GDP and GTP, with rapid nucleotide exchange. Plays a role in 16S rRNA processing and 30S ribosomal subunit biogenesis and possibly also in cell cycle regulation and energy metabolism. This Staphylococcus aureus (strain bovine RF122 / ET3-1) protein is GTPase Era.